The sequence spans 476 residues: Abscisic acid 8'-hydroxylase CYP707A1 (476 aa).

Residues 5–25 (FEIFLYISMFVLGYLSYYFCF) form a helical membrane-spanning segment. Cysteine 422 is a heme binding site.

The protein belongs to the cytochrome P450 family. Heme is required as a cofactor. In terms of tissue distribution, expressed in ovaries (specifically in ovules and placenta), sepals, petals and pedicels.

Its subcellular location is the membrane. The enzyme catalyses 2-cis-(+)-abscisate + reduced [NADPH--hemoprotein reductase] + O2 = (+)-8'-hydroxyabscisate + oxidized [NADPH--hemoprotein reductase] + H2O + H(+). Its pathway is plant hormone degradation; abscisic acid degradation. Involved in the oxidative degradation of abscisic acid, especially in pollinated ovaries. The protein is Abscisic acid 8'-hydroxylase CYP707A1 of Solanum lycopersicum (Tomato).